Consider the following 78-residue polypeptide: Small integral membrane protein 1 (78 aa).

At methionine 1 the chain carries N-acetylmethionine. Residues 1–22 (MQSQESGVHYSRWDSSSRDEVS) are disordered. At 1-48 (MQSQESGVHYSRWDSSSRDEVSMTAMSSSEEASCYRRISQKLCSGKLG) the chain is on the cytoplasmic side. 4 positions are modified to phosphoserine: serine 6, serine 17, serine 22, and serine 27. The span at 11–21 (SRWDSSSRDEV) shows a compositional bias: basic and acidic residues. The helical; Signal-anchor for type II membrane protein transmembrane segment at 49 to 69 (IAMKVLGGVALFWIIFILGYI) threads the bilayer. Over 70–78 (TGYYVHKCK) the chain is Extracellular.

It belongs to the SMIM1 family. Homooligomer; disulfide-linked.

The protein localises to the cell membrane. Its function is as follows. Regulator of red blood cell formation. This chain is Small integral membrane protein 1, found in Mus musculus (Mouse).